Reading from the N-terminus, the 488-residue chain is MSFNHKTIEELHDLLVAKEISATELTQKTLEDIKSREEAVGSFITVSEEAALKQAAAIDAKGIDADNLMSGIPLAVKDNISTKGTLTTAASKMLYNYEPIFDATSVANAYAKDMIVIGKTNMDEFAMGGSTETSYFKKTKNAWDHTKVPGGSSGGSATAVASGQVRLSLGSDTGGSIRQPAAFNGVVGLKPTYGTVSRYGLIAFGSSLDQIGPFAPTVKENAQLLNVIASSDVKDATSAPVRIADYTSKIGRDIKGMKIALPKEYLGEGIDPEIKETVLAAAKQFEALGATVEEVSLPHSKYGVAVYYIIASSEASSNLQRFDGIRYGFRADDAKNLDEIYVNTRSQGFGDEVKRRIMLGTFSLSSGYYDAYFKKAGQVRTLIIEDFDKVFADYDLILGPTTPTVAFGLDTLNHDPVAMYLADLLTIPVNLAGLPGISIPAGFVDGLPVGLQLIGPKYAEETIYQAAAAFETVTDYHKQQPIIFGGDK.

Catalysis depends on charge relay system residues Lys77 and Ser152. Ser176 (acyl-ester intermediate) is an active-site residue.

This sequence belongs to the amidase family. GatA subfamily. In terms of assembly, heterotrimer of A, B and C subunits.

The catalysed reaction is L-glutamyl-tRNA(Gln) + L-glutamine + ATP + H2O = L-glutaminyl-tRNA(Gln) + L-glutamate + ADP + phosphate + H(+). In terms of biological role, allows the formation of correctly charged Gln-tRNA(Gln) through the transamidation of misacylated Glu-tRNA(Gln) in organisms which lack glutaminyl-tRNA synthetase. The reaction takes place in the presence of glutamine and ATP through an activated gamma-phospho-Glu-tRNA(Gln). The protein is Glutamyl-tRNA(Gln) amidotransferase subunit A of Streptococcus pyogenes serotype M2 (strain MGAS10270).